A 175-amino-acid polypeptide reads, in one-letter code: FMN reductase (NADH) RutF (175 aa).

Belongs to the non-flavoprotein flavin reductase family. RutF subfamily.

The catalysed reaction is FMNH2 + NAD(+) = FMN + NADH + 2 H(+). Catalyzes the reduction of FMN to FMNH2 which is used to reduce pyrimidine by RutA via the Rut pathway. The sequence is that of FMN reductase (NADH) RutF from Serratia proteamaculans (strain 568).